Consider the following 245-residue polypeptide: Leucyl/phenylalanyl-tRNA--protein transferase (245 aa).

The protein belongs to the L/F-transferase family.

The protein resides in the cytoplasm. It carries out the reaction N-terminal L-lysyl-[protein] + L-leucyl-tRNA(Leu) = N-terminal L-leucyl-L-lysyl-[protein] + tRNA(Leu) + H(+). The enzyme catalyses N-terminal L-arginyl-[protein] + L-leucyl-tRNA(Leu) = N-terminal L-leucyl-L-arginyl-[protein] + tRNA(Leu) + H(+). It catalyses the reaction L-phenylalanyl-tRNA(Phe) + an N-terminal L-alpha-aminoacyl-[protein] = an N-terminal L-phenylalanyl-L-alpha-aminoacyl-[protein] + tRNA(Phe). Functionally, functions in the N-end rule pathway of protein degradation where it conjugates Leu, Phe and, less efficiently, Met from aminoacyl-tRNAs to the N-termini of proteins containing an N-terminal arginine or lysine. The chain is Leucyl/phenylalanyl-tRNA--protein transferase from Paraburkholderia phymatum (strain DSM 17167 / CIP 108236 / LMG 21445 / STM815) (Burkholderia phymatum).